A 1755-amino-acid chain; its full sequence is MASELEPEVQAIDRSLLECSAEEIAGKWLQATDLTREVYQHLAHYVPKIYCRGPNPFPQKEDMLAQHVLLGPMEWYLCGEDPAFGFPKLEQANKPSHLCGRVFKVGEPTYSCRDCAVDPTCVLCMECFLGSIHRDHRYRMTTSGGGGFCDCGDTEAWKEGPYCQKHELNTSEIEEEEDPLVHLSEDVIARTYNIFAITFRYAVEILTWEKESELPADLEMVEKSDTYYCMLFNDEVHTYEQVIYTLQKAVNCTQKEAIGFATTVDRDGRRSVRYGDFQYCEQAKSVIVRNTSRQTKPLKVQVMHSSIVAHQNFGLKLLSWLGSIIGYSDGLRRILCQVGLQEGPDGENSSLVDRLMLSDSKLWKGARSVYHQLFMSSLLMDLKYKKLFAVRFAKNYQQLQRDFMEDDHERAVSVTALSVQFFTAPTLARMLITEENLMSIIIKTFMDHLRHRDAQGRFQFERYTALQAFKFRRVQSLILDLKYVLISKPTEWSDELRQKFLEGFDAFLELLKCMQGMDPITRQVGQHIEMEPEWEAAFTLQMKLTHVISMMQDWCASDEKVLIEAYKKCLAVLMQCHGGYTDGEQPITLSICGHSVETIRYCVSQEKVSIHLPVSRLLAGLHVLLSKSEVAYKFPELLPLSELSPPMLIEHPLRCLVLCAQVHAGMWRRNGFSLVNQIYYYHNVKCRREMFDKDVVMLQTGVSMMDPNHFLMIMLSRFELYQIFSTPDYGKRFSSEITHKDVVQQNNTLIEEMLYLIIMLVGERFSPGVGQVNATDEIKREIIHQLSIKPMAHSELVKSLPEDENKETGMESVIEAVAHFKKPGLTGRGMYELKPECAKEFNLYFYHFSRAEQSKAEEAQRKLKRQNREDTALPPPVLPPFCPLFASLVNILQSDVMLCIMGTILQWAVEHNGYAWSESMLQRVLHLIGMALQEEKQHLENVTEEHVVTFTFTQKISKPGEAPKNSPSILAMLETLQNAPYLEVHKDMIRWILKTFNAVKKMRESSPTSPVAETEGTIMEESSRDKDKAERKRKAEIARLRREKIMAQMSEMQRHFIDENKELFQQTLELDASTSAVLDHSPVASDMTLTALGPAQTQVPEQRQFVTCILCQEEQEVKVESRAMVLAAFVQRSTVLSKNRSKFIQDPEKYDPLFMHPDLSCGTHTSSCGHIMHAHCWQRYFDSVQAKEQRRQQRLRLHTSYDVENGEFLCPLCECLSNTVIPLLLPPRNIFNNRLNFSDQPNLTQWIRTISQQIKALQFLRKEESTPNNASTKNSENVDELQLPEGFRPDFRPKIPYSESIKEMLTTFGTATYKVGLKVHPNEEDPRVPIMCWGSCAYTIQSIERILSDEDKPLFGPLPCRLDDCLRSLTRFAAAHWTVASVSVVQGHFCKLFASLVPNDSHEELPCILDIDMFHLLVGLVLAFPALQCQDFSGISLGTGDLHIFHLVTMAHIIQILLTSCTEENGMDQENPPCEEESAVLALYKTLHQYTGSALKEIPSGWHLWRSVRAGIMPFLKCSALFFHYLNGVPSPPDIQVPGTSHFEHLCSYLSLPNNLICLFQENSEIMNSLIESWCRNSEVKRYLEGERDAIRYPRESNKLINLPEDYSSLINQASNFSCPKSGGDKSRAPTLCLVCGSLLCSQSYCCQTELEGEDVGACTAHTYSCGSGVGIFLRVRECQVLFLAGKTKGCFYSPPYLDDYGETDQGLRRGNPLHLCKERFKKIQKLWHQHSVTEEIGHAQEANQTLVGIDWQHL.

The residue at position 2 (alanine 2) is an N-acetylalanine. Residue lysine 94 forms a Glycyl lysine isopeptide (Lys-Gly) (interchain with G-Cter in ubiquitin) linkage. The UBR-type zinc finger occupies 97–168 (HLCGRVFKVG…EGPYCQKHEL (72 aa)). Positions 99, 112, 115, 124, 127, 133, and 136 each coordinate Zn(2+). Phenylalanine 148 lines the a peptide pocket. Cysteine 149 contributes to the Zn(2+) binding site. Aspartate 150 contacts a peptide. Cysteine 151 provides a ligand contact to Zn(2+). An a peptide-binding site is contributed by aspartate 153. A Glycyl lysine isopeptide (Lys-Gly) (interchain with G-Cter in ubiquitin) cross-link involves residue lysine 158. Zn(2+) is bound at residue cysteine 163. A Glycyl lysine isopeptide (Lys-Gly) (interchain with G-Cter in ubiquitin) cross-link involves residue lysine 165. Histidine 166 lines the Zn(2+) pocket. Glycyl lysine isopeptide (Lys-Gly) (interchain with G-Cter in ubiquitin) cross-links involve residues lysine 248, lysine 255, and lysine 470. Serine 476 carries the phosphoserine modification. Glycyl lysine isopeptide (Lys-Gly) (interchain with G-Cter in ubiquitin) cross-links involve residues lysine 488, lysine 568, lysine 779, and lysine 789. Residues 1004-1034 (ESSPTSPVAETEGTIMEESSRDKDKAERKRK) form a disordered region. A coiled-coil region spans residues 1019–1054 (MEESSRDKDKAERKRKAEIARLRREKIMAQMSEMQR). Residues 1021–1034 (ESSRDKDKAERKRK) are compositionally biased toward basic and acidic residues. 8 residues coordinate Zn(2+): cysteine 1108, cysteine 1111, cysteine 1168, histidine 1170, histidine 1173, cysteine 1176, cysteine 1210, and cysteine 1213. The segment at 1108-1214 (CILCQEEQEV…NGEFLCPLCE (107 aa)) adopts an RING-type; atypical zinc-finger fold. Residues 1261–1287 (RKEESTPNNASTKNSENVDELQLPEGF) form a disordered region. The segment covering 1266 to 1275 (TPNNASTKNS) has biased composition (polar residues). Residues lysine 1496, lysine 1599, and lysine 1689 each participate in a glycyl lysine isopeptide (Lys-Gly) (interchain with G-Cter in ubiquitin) cross-link. Position 1694 is a phosphoserine (serine 1694). Residue tyrosine 1697 is modified to Phosphotyrosine.

The protein belongs to the E3 ubiquitin-protein ligase UBR1-like family. As to quaternary structure, interacts with UBE2B; promotes the UBE2B-H2A interaction and the ubiquitination of histone H2A by UBE2B and UBR2. Interacts with RECQL4. Interacts with TEX19; does not lead to TEX19 degradation and stabilizes it. Interacts with CASP8. Interacts with ATXN3. Interacts with UBE2O. Dephosphorylated by DUSP22 at Ser-1694 and Tyr-1697, leading to subsequent ubiquitination and proteasomal degradation. In terms of processing, 'Lys-48'-linked ubiquitinated at Lys-94, Lys-779 and Lys-1599 following DUSP22-mediated dephosphorylation of Ser-1694 and Tyr-1697 which promotes UBR2 interaction with the SCF(FBW1A) E3 ubiquitin-protein ligase complex. In terms of tissue distribution, broadly expressed, with highest levels in skeletal muscle, kidney and pancreas. Present in acinar cells of the pancreas (at protein level).

It localises to the nucleus. Its subcellular location is the chromosome. The catalysed reaction is S-ubiquitinyl-[E2 ubiquitin-conjugating enzyme]-L-cysteine + [acceptor protein]-L-lysine = [E2 ubiquitin-conjugating enzyme]-L-cysteine + N(6)-ubiquitinyl-[acceptor protein]-L-lysine.. Its pathway is protein modification; protein ubiquitination. Functionally, E3 ubiquitin-protein ligase which is a component of the N-end rule pathway. Recognizes and binds to proteins bearing specific N-terminal residues (N-degrons) that are destabilizing according to the N-end rule, leading to their ubiquitination and subsequent degradation. Recognizes both type-1 and type-2 N-degrons, containing positively charged amino acids (Arg, Lys and His) and bulky and hydrophobic amino acids, respectively. Does not ubiquitinate proteins that are acetylated at the N-terminus. In contrast, it strongly binds methylated N-degrons. Plays a critical role in chromatin inactivation and chromosome-wide transcriptional silencing during meiosis via ubiquitination of histone H2A. Binds leucine and is a negative regulator of the leucine-mTOR signaling pathway, thereby controlling cell growth. Required for spermatogenesis, promotes, with Tex19.1, SPO11-dependent recombination foci to accumulate and drive robust homologous chromosome synapsis. Polyubiquitinates LINE-1 retrotransposon encoded, LIRE1, which induces degradation, inhibiting LINE-1 retrotransposon mobilization. Catalyzes ubiquitination and degradation of the N-terminal part of NLRP1 following NLRP1 activation by pathogens and other damage-associated signals: ubiquitination promotes degradation of the N-terminal part and subsequent release of the cleaved C-terminal part of NLRP1, which polymerizes and forms the NLRP1 inflammasome followed by host cell pyroptosis. Plays a role in T-cell receptor signaling by inducing 'Lys-63'-linked ubiquitination of lymphocyte cell-specific kinase LCK. This activity is regulated by DUSP22, which induces 'Lys-48'-linked ubiquitination of UBR2, leading to its proteasomal degradation by SCF E3 ubiquitin-protein ligase complex. The sequence is that of E3 ubiquitin-protein ligase UBR2 (UBR2) from Homo sapiens (Human).